A 213-amino-acid polypeptide reads, in one-letter code: Kynurenine formamidase (213 aa).

W18 contributes to the substrate binding site. Residues H48, H52, and D54 each contribute to the Zn(2+) site. Residue H58 is the Proton donor/acceptor of the active site. H160 and E172 together coordinate Zn(2+).

The protein belongs to the Cyclase 1 superfamily. KynB family. In terms of assembly, homodimer. Requires Zn(2+) as cofactor.

The catalysed reaction is N-formyl-L-kynurenine + H2O = L-kynurenine + formate + H(+). It functions in the pathway amino-acid degradation; L-tryptophan degradation via kynurenine pathway; L-kynurenine from L-tryptophan: step 2/2. Catalyzes the hydrolysis of N-formyl-L-kynurenine to L-kynurenine, the second step in the kynurenine pathway of tryptophan degradation. The chain is Kynurenine formamidase from Burkholderia ambifaria (strain ATCC BAA-244 / DSM 16087 / CCUG 44356 / LMG 19182 / AMMD) (Burkholderia cepacia (strain AMMD)).